Consider the following 95-residue polypeptide: MGLRYSKDVKDRYGDREPEGRIPITLNMPQSLYGRYNCKSCWFANKGLLKCSNHYLCLKCLTLMLRRSDYCGICGEVLPKKLVFENSPSAPPYEA.

A lipid anchor (N-myristoyl glycine; by host) is attached at Gly2. The segment at 38–74 (CKSCWFANKGLLKCSNHYLCLKCLTLMLRRSDYCGIC) adopts an RING-type; atypical zinc-finger fold. Residues 88–91 (PSAP) carry the PTAP/PSAP motif motif.

Belongs to the arenaviridae Z protein family. In terms of assembly, interacts with protein NP; this interaction probably directs the encapsidated genome to budding sites. Interacts (via RING domain) with polymerase L; this interaction inhibits viral transcription and replication, Z partially blocks the product exit tunnel for the releasing nascent RNA product. Interacts with the glycoprotein complex; this interaction plays a role in virion budding. Interacts with host eIF4E; this interaction results in eIF4E reduced affinity for its substrate, the 5'-m7 G cap structure. Interacts (via late-budding domain) with host TSG101; this interaction is essential for budding and release of viral particles. Interacts with host RPLP0; this interaction may serve to load ribosome-like particles inside the virion. Interacts with host PML; this interaction induces PML bodies redistribution in the cytoplasm upon viral infection. Myristoylation is required for the role of RING finger protein Z in assembly and budding.

Its subcellular location is the virion. The protein resides in the host cytoplasm. It localises to the host perinuclear region. The protein localises to the host cell membrane. Its function is as follows. Plays a crucial role in virion assembly and budding. Expressed late in the virus life cycle, it acts as an inhibitor of viral transcription and RNA synthesis by interacting with the viral polymerase L. Presumably recruits the NP encapsidated genome to cellular membranes at budding sites via direct interaction with NP. Plays critical roles in the final steps of viral release by interacting with host TSG101, a member of the vacuolar protein-sorting pathway and using other cellular host proteins involved in vesicle formation pathway. The budding of the virus progeny occurs after association of protein Z with the viral glycoprotein complex SSP-GP1-GP2 at the cell periphery, step that requires myristoylation of protein Z. Also selectively represses protein production by associating with host eIF4E. In cell-based minigenome assay, has an inhibitory effect on the ribonucleoprotein machinery (vRNP), which is responsible for the replication and transcription of the viral genome. In Neotoma (wood rats), this protein is RING finger protein Z.